Consider the following 401-residue polypeptide: Argininosuccinate synthase (401 aa).

Residues 10–18 (AYSGGLDTS) and A37 each bind ATP. Residue Y89 coordinates L-citrulline. G119 is an ATP binding site. T121, N125, and D126 together coordinate L-aspartate. N125 contacts L-citrulline. L-citrulline is bound by residues R129, S178, S187, E263, and Y275.

It belongs to the argininosuccinate synthase family. Type 1 subfamily. Homotetramer.

The protein localises to the cytoplasm. The enzyme catalyses L-citrulline + L-aspartate + ATP = 2-(N(omega)-L-arginino)succinate + AMP + diphosphate + H(+). It functions in the pathway amino-acid biosynthesis; L-arginine biosynthesis; L-arginine from L-ornithine and carbamoyl phosphate: step 2/3. The protein is Argininosuccinate synthase of Buchnera aphidicola subsp. Schizaphis graminum (strain Sg).